A 368-amino-acid chain; its full sequence is Flagellar P-ring protein (368 aa).

The N-terminal stretch at Met-1–Ala-24 is a signal peptide.

This sequence belongs to the FlgI family. As to quaternary structure, the basal body constitutes a major portion of the flagellar organelle and consists of four rings (L,P,S, and M) mounted on a central rod.

Its subcellular location is the periplasm. It is found in the bacterial flagellum basal body. Its function is as follows. Assembles around the rod to form the L-ring and probably protects the motor/basal body from shearing forces during rotation. The protein is Flagellar P-ring protein of Geobacter sulfurreducens (strain ATCC 51573 / DSM 12127 / PCA).